Here is a 450-residue protein sequence, read N- to C-terminus: Probable malate:quinone oxidoreductase (450 aa).

It belongs to the MQO family. Requires FAD as cofactor.

It carries out the reaction (S)-malate + a quinone = a quinol + oxaloacetate. It functions in the pathway carbohydrate metabolism; tricarboxylic acid cycle; oxaloacetate from (S)-malate (quinone route): step 1/1. This is Probable malate:quinone oxidoreductase from Helicobacter acinonychis (strain Sheeba).